Here is a 345-residue protein sequence, read N- to C-terminus: Probable fructokinase-3 (345 aa).

Belongs to the carbohydrate kinase PfkB family.

It carries out the reaction D-fructose + ATP = D-fructose 6-phosphate + ADP + H(+). The protein operates within glycan biosynthesis; starch biosynthesis. Its function is as follows. May play an important role in maintaining the flux of carbon towards starch formation. In Arabidopsis thaliana (Mouse-ear cress), this protein is Probable fructokinase-3.